The chain runs to 397 residues: Aurora kinase A (397 aa).

A disordered region spans residues 1 to 118 (MDRCKENCVS…SIQKTEDSKK (118 aa)). 2 stretches are compositionally biased toward polar residues: residues 29–55 (QIPS…SQRV) and 84–102 (RLSN…SGNN). A phosphoserine mark is found at Ser-40 and Ser-50. The segment covering 103–118 (SEKEQTSIQKTEDSKK) has biased composition (basic and acidic residues). A Protein kinase domain is found at 126–376 (FDIGRPLGKG…LAEVLEHPWI (251 aa)). Residues Lys-136, Lys-155, and 203–206 (LEYA) contribute to the ATP site. The Proton acceptor role is filled by Asp-249. Lys-251 participates in a covalent cross-link: Glycyl lysine isopeptide (Lys-Gly) (interchain with G-Cter in SUMO2). ATP-binding positions include 253–254 (EN) and Asp-267. Residues 273–286 (HAPSSRRTTLCGTL) form an activation segment region. Thr-280 and Thr-281 each carry phosphothreonine. Ser-335 bears the Phosphoserine; by PKA and PAK mark. Residues 378–387 (ANSSKPPTGH) show a composition bias toward polar residues. A disordered region spans residues 378–397 (ANSSKPPTGHNSKEATSKSS). Basic and acidic residues predominate over residues 388–397 (NSKEATSKSS).

Belongs to the protein kinase superfamily. Ser/Thr protein kinase family. Aurora subfamily. In terms of assembly, part of a complex composed of NEDD9, AURKA and CTTN; within the complex NEDD9 acts as a scaffold protein and is required for complex formation. Identified in a complex with AUNIP and NIN. Interacts with CPEB1, JTB, TACC1, TPX2, PPP2CA, as well as with the protein phosphatase type 1 (PP1) isoforms PPP1CA, PPP1CB and PPP1CC. Also interacts with its substrates ARHGEF2, BORA, KIF2A, PARD3, and p53/TP53. Interaction with BORA promotes phosphorylation of PLK1. Interacts with FBXL7 and CIMAP3. Interacts with GADD45A, competing with its oligomerization. Interacts (via C-terminus) with AUNIP (via C-terminus). Interacts with SIRT2. Interacts with FRY; this interaction facilitates AURKA-mediated PLK1 phosphorylation. Interacts with MYCN; interaction is phospho-independent and triggers AURKA activation; AURKA competes with FBXW7 for binding to unphosphorylated MYCN but not for binding to phosphorylated MYCN. Interacts with HNRNPU. Interacts with AAAS. Interacts with KLHL18 and CUL3. Interacts with FOXP1. Interacts with HDAC6; AURKA-mediated phosphorylation of HDAC6 promotes deacetylation of alpha-tubulin. In terms of processing, activated by phosphorylation at Thr-281; this brings about a change in the conformation of the activation segment. Phosphorylation at Thr-281 varies during the cell cycle and is highest during M phase. Autophosphorylated at Thr-281 upon TPX2 binding. Thr-281 can be phosphorylated by several kinases, including PAK and PKA. Protein phosphatase type 1 (PP1) binds AURKA and inhibits its activity by dephosphorylating Thr-281 during mitosis. Phosphorylation at Ser-335 decreases the kinase activity. PPP2CA controls degradation by dephosphorylating Ser-52 at the end of mitosis. Phosphorylated in embryonic brain neurons. Ubiquitinated by CHFR, leading to its degradation by the proteasome. Ubiquitinated by the anaphase-promoting complex (APC), leading to its degradation by the proteasome. Ubiquitinated by the E3 ubiquitin-protein ligase complex SCF(FBXL7) during mitosis, leading to its degradation by the proteasome. Ubiquitinated by the CUL3-KLHL18 ligase leading to its activation at the centrosome which is required for initiating mitotic entry. Ubiquitination mediated by CUL3-KLHL18 ligase does not lead to its degradation by the proteasome. In terms of tissue distribution, detected in neurons in brain cortex and hippocampus (at protein level). Expressed in mammary gland and tumor.

The protein localises to the cytoplasm. The protein resides in the cytoskeleton. It is found in the microtubule organizing center. Its subcellular location is the centrosome. It localises to the spindle pole. The protein localises to the centriole. The protein resides in the cell projection. It is found in the neuron projection. Its subcellular location is the cilium. It localises to the cilium basal body. The protein localises to the basolateral cell membrane. The enzyme catalyses L-seryl-[protein] + ATP = O-phospho-L-seryl-[protein] + ADP + H(+). It carries out the reaction L-threonyl-[protein] + ATP = O-phospho-L-threonyl-[protein] + ADP + H(+). With respect to regulation, activation of CDK1, appears to be an upstream event of AURKA activation. Phosphatase inhibitor-2 (PPP1R2) and TPX2 act also as activators. Inactivated by the G2 checkpoint. Inhibited by GADD45A and p53/TP53, and through dephosphorylation by protein phosphatase type 1 (PP1). MLN8054 is also a potent and selective inhibitor. Activated during the early phase of cilia disassembly in the presence of FBXL7 and CIMAP3. Inhibited by the small molecule inhibitor VX-680. Its function is as follows. Mitotic serine/threonine kinase that contributes to the regulation of cell cycle progression. Associates with the centrosome and the spindle microtubules during mitosis and plays a critical role in various mitotic events including the establishment of mitotic spindle, centrosome duplication, centrosome separation as well as maturation, chromosomal alignment, spindle assembly checkpoint, and cytokinesis. Required for normal spindle positioning during mitosis and for the localization of NUMA1 and DCTN1 to the cell cortex during metaphase. Required for initial activation of CDK1 at centrosomes. Phosphorylates numerous target proteins, including ARHGEF2, BORA, BRCA1, CDC25B, DLGP5, HDAC6, KIF2A, LATS2, NDEL1, PARD3, PPP1R2, PLK1, RASSF1, TACC3, p53/TP53 and TPX2. Phosphorylates MCRS1 which is required for MCRS1-mediated kinetochore fiber assembly and mitotic progression. Regulates KIF2A tubulin depolymerase activity. Required for normal axon formation. Plays a role in microtubule remodeling during neurite extension. Important for microtubule formation and/or stabilization. Also acts as a key regulatory component of the p53/TP53 pathway, and particularly the checkpoint-response pathways critical for oncogenic transformation of cells, by phosphorylating and stabilizating p53/TP53. Phosphorylates its own inhibitors, the protein phosphatase type 1 (PP1) isoforms, to inhibit their activity. Inhibits cilia outgrowth. Required for cilia disassembly via phosphorylation of HDAC6 and subsequent deacetylation of alpha-tubulin. Regulates protein levels of the anti-apoptosis protein BIRC5 by suppressing the expression of the SCF(FBXL7) E3 ubiquitin-protein ligase substrate adapter FBXL7 through the phosphorylation of the transcription factor FOXP1. The protein is Aurora kinase A of Rattus norvegicus (Rat).